The primary structure comprises 142 residues: Large ribosomal subunit protein uL11 (142 aa).

This sequence belongs to the universal ribosomal protein uL11 family. Part of the ribosomal stalk of the 50S ribosomal subunit. Interacts with L10 and the large rRNA to form the base of the stalk. L10 forms an elongated spine to which L12 dimers bind in a sequential fashion forming a multimeric L10(L12)X complex. In terms of processing, one or more lysine residues are methylated.

In terms of biological role, forms part of the ribosomal stalk which helps the ribosome interact with GTP-bound translation factors. The polypeptide is Large ribosomal subunit protein uL11 (Mycolicibacterium gilvum (strain PYR-GCK) (Mycobacterium gilvum (strain PYR-GCK))).